The primary structure comprises 390 residues: Chorismate synthase (390 aa).

NADP(+) is bound by residues Arg39 and Arg45. Residues 132-134 (RSS), 253-254 (NA), Gly298, 313-317 (KPIPT), and Arg339 contribute to the FMN site.

This sequence belongs to the chorismate synthase family. As to quaternary structure, homotetramer. Requires FMNH2 as cofactor.

It carries out the reaction 5-O-(1-carboxyvinyl)-3-phosphoshikimate = chorismate + phosphate. It functions in the pathway metabolic intermediate biosynthesis; chorismate biosynthesis; chorismate from D-erythrose 4-phosphate and phosphoenolpyruvate: step 7/7. Its function is as follows. Catalyzes the anti-1,4-elimination of the C-3 phosphate and the C-6 proR hydrogen from 5-enolpyruvylshikimate-3-phosphate (EPSP) to yield chorismate, which is the branch point compound that serves as the starting substrate for the three terminal pathways of aromatic amino acid biosynthesis. This reaction introduces a second double bond into the aromatic ring system. The sequence is that of Chorismate synthase from Bacillus licheniformis (strain ATCC 14580 / DSM 13 / JCM 2505 / CCUG 7422 / NBRC 12200 / NCIMB 9375 / NCTC 10341 / NRRL NRS-1264 / Gibson 46).